The primary structure comprises 251 residues: Ubiquinone/menaquinone biosynthesis C-methyltransferase UbiE (251 aa).

Residues T74, D95, 123–124 (NA), and S140 contribute to the S-adenosyl-L-methionine site.

This sequence belongs to the class I-like SAM-binding methyltransferase superfamily. MenG/UbiE family.

It catalyses the reaction a 2-demethylmenaquinol + S-adenosyl-L-methionine = a menaquinol + S-adenosyl-L-homocysteine + H(+). The enzyme catalyses a 2-methoxy-6-(all-trans-polyprenyl)benzene-1,4-diol + S-adenosyl-L-methionine = a 5-methoxy-2-methyl-3-(all-trans-polyprenyl)benzene-1,4-diol + S-adenosyl-L-homocysteine + H(+). It participates in quinol/quinone metabolism; menaquinone biosynthesis; menaquinol from 1,4-dihydroxy-2-naphthoate: step 2/2. It functions in the pathway cofactor biosynthesis; ubiquinone biosynthesis. In terms of biological role, methyltransferase required for the conversion of demethylmenaquinol (DMKH2) to menaquinol (MKH2) and the conversion of 2-polyprenyl-6-methoxy-1,4-benzoquinol (DDMQH2) to 2-polyprenyl-3-methyl-6-methoxy-1,4-benzoquinol (DMQH2). The sequence is that of Ubiquinone/menaquinone biosynthesis C-methyltransferase UbiE from Serratia proteamaculans (strain 568).